The following is a 232-amino-acid chain: Uracil phosphoribosyltransferase (232 aa).

38-42 (KGLVK) serves as a coordination point for GTP. Residues Arg-87, Arg-112, and 140–148 (DPMIATGST) contribute to the 5-phospho-alpha-D-ribose 1-diphosphate site. Uracil-binding positions include Ile-204 and 209–211 (GDA). Residue Asp-210 participates in 5-phospho-alpha-D-ribose 1-diphosphate binding.

The protein belongs to the UPRTase family. It depends on Mg(2+) as a cofactor.

It catalyses the reaction UMP + diphosphate = 5-phospho-alpha-D-ribose 1-diphosphate + uracil. It functions in the pathway pyrimidine metabolism; UMP biosynthesis via salvage pathway; UMP from uracil: step 1/1. Its activity is regulated as follows. Allosterically activated by GTP. In terms of biological role, catalyzes the conversion of uracil and 5-phospho-alpha-D-ribose 1-diphosphate (PRPP) to UMP and diphosphate. The protein is Uracil phosphoribosyltransferase of Pyrococcus furiosus (strain ATCC 43587 / DSM 3638 / JCM 8422 / Vc1).